Here is a 201-residue protein sequence, read N- to C-terminus: Ras-like GTP-binding protein YPT1 (201 aa).

GTP-binding positions include 15-23 (GDSGVGKSC), 33-40 (YTESYIST), 63-67 (DTAGQ), 121-124 (NKSD), and 151-153 (SAK). The Effector region signature appears at 37 to 45 (YISTIGVDF). 2 S-geranylgeranyl cysteine lipidation sites follow: cysteine 200 and cysteine 201.

Belongs to the small GTPase superfamily. Rab family.

The protein resides in the endoplasmic reticulum membrane. It localises to the golgi apparatus membrane. The protein localises to the cytoplasm. It is found in the preautophagosomal structure membrane. Its activity is regulated as follows. Rab activation is generally mediated by a guanine exchange factor (GEF), while inactivation through hydrolysis of bound GTP is catalyzed by a GTPase activating protein (GAP). In terms of biological role, the small GTPases Rab are key regulators of intracellular membrane trafficking, from the formation of transport vesicles to their fusion with membranes. Rabs cycle between an inactive GDP-bound form and an active GTP-bound form that is able to recruit to membranes different set of downstream effectors directly responsible for vesicle formation, movement, tethering and fusion. YPT1 regulates the trafficking of secretory vesicles from the endoplasmic reticulum (ER) to the Golgi. Plays a role in the initial events of the autophagic vacuole development which take place at specialized regions of the endoplasmic reticulum. Also involved in the recycling of membrane proteins. The chain is Ras-like GTP-binding protein YPT1 (YPT1) from Phytophthora infestans (Potato late blight agent).